A 202-amino-acid polypeptide reads, in one-letter code: MIDNFKEIRLDFKDELKKITGKEVEFPKYTTQIINLANQNAQGTRPRVVGQMSDLIHECPDKSYEGWKKWYLEHYSDRIEKATKKISKMIENMKAAMELIDEEMIRKWVEDLVITKTAEGLIIQEIILKTIAEEAGLEWRLATSKEESKNIDGFIGSTPVSIKPMSYESMRPTVREEIDIQTIFYKKPKNSRYLYIYHNLNI.

The enzyme catalyses Endonucleolytic cleavage of DNA to give specific double-stranded fragments with terminal 5'-phosphates.. In terms of biological role, a P subtype restriction enzyme that recognizes the double-stranded sequence 5'-CTAG-3' and cleaves after C-1. The chain is Type II restriction enzyme MthZI from Methanothermobacter thermautotrophicus (Methanobacterium thermoformicicum).